The following is a 218-amino-acid chain: 7-cyano-7-deazaguanine synthase 1 (218 aa).

Residue 9–19 (YSGGMDSFTVL) coordinates ATP. Residues Cys185, Cys193, Cys196, and Cys199 each contribute to the Zn(2+) site.

The protein belongs to the QueC family. Zn(2+) is required as a cofactor.

The enzyme catalyses 7-carboxy-7-deazaguanine + NH4(+) + ATP = 7-cyano-7-deazaguanine + ADP + phosphate + H2O + H(+). It functions in the pathway purine metabolism; 7-cyano-7-deazaguanine biosynthesis. Catalyzes the ATP-dependent conversion of 7-carboxy-7-deazaguanine (CDG) to 7-cyano-7-deazaguanine (preQ(0)). The protein is 7-cyano-7-deazaguanine synthase 1 of Colwellia psychrerythraea (strain 34H / ATCC BAA-681) (Vibrio psychroerythus).